A 326-amino-acid chain; its full sequence is Ig gamma-1 chain C region (326 aa).

Positions 1–97 are CH1; that stretch reads AETTAPSVYP…ASSTKVDKKI (97 aa). A disulfide bridge connects residues cysteine 27 and cysteine 82. Residues 98-112 are hinge; the sequence is VPRNCGGDCKPCICT. Residues 113-219 form a CH2 region; sequence GSEVSSVFIF…PIEKTISKPE (107 aa). Cystine bridges form between cysteine 140/cysteine 200 and cysteine 246/cysteine 304. An N-linked (GlcNAc...) asparagine glycan is attached at asparagine 176. The tract at residues 220–326 is CH3; that stretch reads GRTQVPHVYT…EKSLSHSPGK (107 aa).

In Rattus norvegicus (Rat), this protein is Ig gamma-1 chain C region.